The primary structure comprises 42 residues: Iota-conotoxin-like R11.1 (42 aa).

Disulfide bonds link Cys-5/Cys-19, Cys-12/Cys-22, Cys-18/Cys-27, and Cys-21/Cys-36.

It belongs to the conotoxin I1 superfamily. Expressed by the venom duct.

The protein resides in the secreted. Functionally, iota-conotoxins bind to voltage-gated sodium channels (Nav) and act as agonists by shifting the voltage-dependence of activation to more hyperpolarized levels. Produces general excitatory symptoms. The protein is Iota-conotoxin-like R11.1 of Conus radiatus (Rayed cone).